The primary structure comprises 404 residues: S-adenosylmethionine synthase (404 aa).

H16 serves as a coordination point for ATP. Position 18 (D18) interacts with Mg(2+). Residue E44 coordinates K(+). Residues E57 and Q100 each coordinate L-methionine. The tract at residues 100–110 (QSPEINQGVAR) is flexible loop. ATP is bound by residues 177–179 (DGK), D257, 263–264 (RK), A280, and K284. L-methionine is bound at residue D257. L-methionine is bound at residue K288.

Belongs to the AdoMet synthase family. Homotetramer; dimer of dimers. Mg(2+) is required as a cofactor. Requires K(+) as cofactor.

Its subcellular location is the cytoplasm. It carries out the reaction L-methionine + ATP + H2O = S-adenosyl-L-methionine + phosphate + diphosphate. Its pathway is amino-acid biosynthesis; S-adenosyl-L-methionine biosynthesis; S-adenosyl-L-methionine from L-methionine: step 1/1. Its function is as follows. Catalyzes the formation of S-adenosylmethionine (AdoMet) from methionine and ATP. The overall synthetic reaction is composed of two sequential steps, AdoMet formation and the subsequent tripolyphosphate hydrolysis which occurs prior to release of AdoMet from the enzyme. This Bifidobacterium adolescentis (strain ATCC 15703 / DSM 20083 / NCTC 11814 / E194a) protein is S-adenosylmethionine synthase.